A 1819-amino-acid polypeptide reads, in one-letter code: Protein REDUCED CHLOROPLAST COVERAGE 2 (1819 aa).

The segment covering 1-17 (MAPKAGKTKPHKSKGEK) has biased composition (basic residues). Disordered regions lie at residues 1-23 (MAPK…KEEK), 128-180 (KPPV…GACE), 595-619 (QASS…GLGK), and 634-664 (KANK…LEKQ). Basic and acidic residues-rich tracts occupy residues 135–145 (LPKDSEKKESG) and 600–612 (SESK…KPEP). One can recognise a Clu domain in the interval 329-603 (EDETWGGDGG…NQASSKSESK (275 aa)). Residues 649–680 (TDNTSETEDQKELEKQNEEIEKMWKELVTETA) adopt a coiled-coil conformation. TPR repeat units follow at residues 892-925 (GRTL…LVAV), 934-967 (AGAY…NERE), 976-1009 (MKSY…LHLT), 1018-1051 (AATY…NQRL), and 1060-1093 (AASY…LQAK). Disordered stretches follow at residues 1152–1360 (SGIK…PMLS), 1413–1456 (KVNA…SPKE), 1468–1513 (KAFP…SESV), 1527–1573 (LKTV…ASAP), 1616–1670 (STPH…PRIM), and 1731–1809 (LVSE…DYSD). Composition is skewed to basic and acidic residues over residues 1199–1224 (SSDK…EQSK) and 1230–1239 (KLVKPEATVH). Phosphoserine is present on Ser-1244. Residues 1269–1313 (KLNTNFMNVTQQPSRSRGKSTNFTSPRTSSNELSISVAGSTSSPA) show a composition bias toward polar residues. Ser-1320 is modified (phosphoserine). Residues 1343–1354 (LASSACTEQINK) are compositionally biased toward polar residues. 2 stretches are compositionally biased toward polar residues: residues 1496-1511 (CLLN…NGSE) and 1536-1546 (NLPNGDSSPKS). The segment covering 1551-1566 (DGEKQDACEAQKEMSK) has biased composition (basic and acidic residues). Polar residues predominate over residues 1650–1665 (SFPNSTESNGEANQFN). Basic and acidic residues predominate over residues 1742 to 1759 (SEEKSGSEEESNNDKNAG). Residues 1767–1778 (QETTDTPENGHS) are compositionally biased toward polar residues. Over residues 1785–1800 (TTSHETCDEKNGERQG) the composition is skewed to basic and acidic residues.

In terms of tissue distribution, expressed in the non-epidermal tissues of the true leaves. Not detected in the vegetative shoot meristem and leaf primordia.

It is found in the nucleus. The protein resides in the cytoplasm. The protein localises to the cytosol. Negatively regulates meristematic tissue proliferation by integrating developmental signals with carbon source availability. May act as the scaffold of a protein complex, which sequesters key factors that are required for the G2 to M transition in meristematic tissues. Together with REC2, REC3 and FMT/CLU, contributes to the establishment of the cellular volume devoted to the chloroplast compartment. This Arabidopsis thaliana (Mouse-ear cress) protein is Protein REDUCED CHLOROPLAST COVERAGE 2.